Here is a 276-residue protein sequence, read N- to C-terminus: Checkpoint protein HUS1B (276 aa).

It belongs to the HUS1 family. Interacts with RAD1 and RAD9B.

The sequence is that of Checkpoint protein HUS1B (Hus1b) from Mus musculus (Mouse).